The chain runs to 641 residues: Putative ABC transporter ATP-binding protein MA_0870 (641 aa).

In terms of domain architecture, ABC transporter 1 spans 10–250; it reads IEIKDLWYTY…IEVFHRLGLR (241 aa). 44 to 51 provides a ligand contact to ATP; it reads GPTGCGKS. The tract at residues 286-332 is disordered; that stretch reads VKTPRNFSNPEEETGRRTDPAERNEFVNTGSGNIKYGDNRSENKGSE. Basic and acidic residues-rich tracts occupy residues 298–310 and 322–332; these read ETGR…ERNE and GDNRSENKGSE. In terms of domain architecture, ABC transporter 2 spans 338-566; the sequence is ISIRDLWSGY…IEILKQASLT (229 aa). 371–378 contacts ATP; that stretch reads GTNGSGKS.

This sequence belongs to the ABC transporter superfamily.

It is found in the cell membrane. In terms of biological role, probably part of an ABC transporter complex. Responsible for energy coupling to the transport system. The polypeptide is Putative ABC transporter ATP-binding protein MA_0870 (Methanosarcina acetivorans (strain ATCC 35395 / DSM 2834 / JCM 12185 / C2A)).